Reading from the N-terminus, the 688-residue chain is Protein adenylyltransferase SelO, mitochondrial (688 aa).

A mitochondrion-targeting transit peptide spans Met1–Leu23. ATP-binding residues include Gly132, Gly134, Arg135, Lys156, Asp168, Gly169, Arg220, and Arg227. Asp338 serves as the catalytic Proton acceptor. 2 residues coordinate Mg(2+): Asn339 and Asp348. Position 348 (Asp348) interacts with ATP.

This sequence belongs to the SELO family. It depends on Mg(2+) as a cofactor. Post-translationally, forms probably one or more intrachain disulfide bridges.

The protein resides in the mitochondrion. It catalyses the reaction L-tyrosyl-[protein] + ATP = O-(5'-adenylyl)-L-tyrosyl-[protein] + diphosphate. In terms of biological role, catalyzes the transfer of adenosine 5'-monophosphate (AMP) to Tyr residues of target mitochondrial proteins (AMPylation). Involved in redox homeostasis by regulating the cellular response to oxidative stress. Regulates protein S-glutathionylation levels possibly by AMPylation of deglutathionylation enzymes such as glutaredoxins. This is Protein adenylyltransferase SelO, mitochondrial from Saccharomyces cerevisiae (strain ATCC 204508 / S288c) (Baker's yeast).